A 107-amino-acid polypeptide reads, in one-letter code: U-scoloptoxin(18)-Er1a (107 aa).

Positions 1-21 (MQRFLCLVACSVVLLVLGIVA) are cleaved as a signal peptide.

Belongs to the scoloptoxin-18 family. In terms of processing, contains 5 disulfide bonds. Expressed by the venom gland.

The protein localises to the secreted. The protein is U-scoloptoxin(18)-Er1a of Ethmostigmus rubripes (Giant centipede).